The sequence spans 487 residues: Iron-sulfur cluster assembly SufBD family protein ycf24 (487 aa).

This sequence belongs to the iron-sulfur cluster assembly SufBD family.

It localises to the plastid. The protein localises to the chloroplast. In Porphyra purpurea (Red seaweed), this protein is Iron-sulfur cluster assembly SufBD family protein ycf24 (ycf24).